Consider the following 277-residue polypeptide: MKTKLDFLKMKESEEPIVMLTAYDYPAAKLAEQAGVDMILVGDSLGMVVLGLDSTVGVTVADMIHHTKAVKRGAPNTFIVTDMPFMSYHLSKEDTLKNAAAIVQESGADALKLEGGEGVFESIRALTLGGIPVVSHLGLTPQSVGVLGGYKVQGKDEQSAKKLIEDSIKCEEAGAMMLVLECVPAELTAKIAETLSIPVIGIGAGVKADGQVLVYHDIIGHGVERTPKFVKQYTRIDETIETAISGYVQDVRHRAFPEQKHSFQMNQTVLDGLYGGK.

Aspartate 43 and aspartate 82 together coordinate Mg(2+). 3-methyl-2-oxobutanoate contacts are provided by residues aspartate 43 to serine 44, aspartate 82, and lysine 112. Glutamate 114 serves as a coordination point for Mg(2+). Catalysis depends on glutamate 181, which acts as the Proton acceptor.

This sequence belongs to the PanB family. Homodecamer; pentamer of dimers. Mg(2+) serves as cofactor.

Its subcellular location is the cytoplasm. It catalyses the reaction 3-methyl-2-oxobutanoate + (6R)-5,10-methylene-5,6,7,8-tetrahydrofolate + H2O = 2-dehydropantoate + (6S)-5,6,7,8-tetrahydrofolate. Its pathway is cofactor biosynthesis; (R)-pantothenate biosynthesis; (R)-pantoate from 3-methyl-2-oxobutanoate: step 1/2. In terms of biological role, catalyzes the reversible reaction in which hydroxymethyl group from 5,10-methylenetetrahydrofolate is transferred onto alpha-ketoisovalerate to form ketopantoate. The chain is 3-methyl-2-oxobutanoate hydroxymethyltransferase from Bacillus subtilis (strain 168).